Reading from the N-terminus, the 451-residue chain is Opioid growth factor receptor-like protein 1 (451 aa).

Disordered stretches follow at residues 1–89 and 308–451; these read MGNL…TAKP and ENFI…VLVQ. Positions 43-66 are enriched in low complexity; it reads PGQESEQPAQPPEQAGGRPGASPA. The span at 322–341 shows a compositional bias: polar residues; sequence GSKAQKMSSPLASSHNSQTS. Basic and acidic residues-rich tracts occupy residues 362-381 and 389-399; these read TAEDKKVAPKEPVEETDRPS and AKPRNTEKDSN. Residues 431–443 are compositionally biased toward low complexity; the sequence is NDNQDNENPGNTN.

The protein belongs to the opioid growth factor receptor family. As to expression, ubiquitous.

This Homo sapiens (Human) protein is Opioid growth factor receptor-like protein 1 (OGFRL1).